The sequence spans 111 residues: Probable monothiol glutaredoxin 2 (111 aa).

Residues 7–109 enclose the Glutaredoxin domain; the sequence is LKFIQNAIKK…KMLKDETKLI (103 aa). Glutathione is bound at residue lysine 24. Cysteine 32 contacts [2Fe-2S] cluster. Residues arginine 61, phenylalanine 73, and 86–87 each bind glutathione; that span reads CD.

It belongs to the glutaredoxin family. Monothiol subfamily.

In Rickettsia typhi (strain ATCC VR-144 / Wilmington), this protein is Probable monothiol glutaredoxin 2 (grxC2).